We begin with the raw amino-acid sequence, 475 residues long: Methylenomycin A resistance protein (475 aa).

The next 14 membrane-spanning stretches (helical) occupy residues 28 to 48 (ITALATGFVMATLDVTVVNVA), 65 to 85 (WIVDGYVLTFASLLMLAGGLA), 93 to 113 (VYLWGMGVFFLASLACALAPT), 123 to 143 (VQGAGAALFMPSSLSLLVFSF), 152 to 172 (MLGLWSAIVATSSGLGPTVGG), 173 to 193 (LMVSAFGWESIFLLNLPIGAI), 212 to 232 (LAVPGHLLWIVALAAVSFALI), 240 to 260 (TAGPVLTAYAVAVTAAALLAL), 285 to 305 (LVGFLFNFALFGSTFMLGLYF), 314 to 334 (FQAGLELLPMTIFFPVANIVY), 346 to 366 (LLTAFLLLAGAASLSMVTITA), 371 to 391 (WVVAVAVGVANIGAGIISPGM), 416 to 436 (QIGSLVGIAAMGVVLHSTSDW), and 439 to 459 (GAAISFLAVGLAYLLGGLSAW).

The protein belongs to the major facilitator superfamily.

The protein resides in the cell membrane. Resistance to the epoxide antibiotic methylenomycin A; probably by mediating its efflux. This is Methylenomycin A resistance protein (mmr) from Streptomyces coelicolor (strain ATCC BAA-471 / A3(2) / M145).